A 942-amino-acid polypeptide reads, in one-letter code: Leucine--tRNA ligase 2 (942 aa).

Positions 35–45 (PYPNSPFHLGH) match the 'HIGH' region motif. The 'KMSKS' region signature appears at 619–623 (KMSKS). K622 is a binding site for ATP.

It belongs to the class-I aminoacyl-tRNA synthetase family.

Its subcellular location is the cytoplasm. The enzyme catalyses tRNA(Leu) + L-leucine + ATP = L-leucyl-tRNA(Leu) + AMP + diphosphate. This is Leucine--tRNA ligase 2 from Sulfolobus acidocaldarius (strain ATCC 33909 / DSM 639 / JCM 8929 / NBRC 15157 / NCIMB 11770).